Here is a 591-residue protein sequence, read N- to C-terminus: CTP synthase 1 (591 aa).

An N6-acetyllysine modification is found at Lys100. The 255-residue stretch at 300-554 (SIALVGKYTK…LASVGRLSHY (255 aa)) folds into the Glutamine amidotransferase type-1 domain. Catalysis depends on for GATase activity residues Cys399, His526, and Glu528. 8 positions are modified to phosphoserine: Ser562, Ser568, Ser571, Ser573, Ser574, Ser575, Ser578, and Ser587. A disordered region spans residues 562–591 (SPRDTYSDRSGSSSPDSEITELKFPSINHD). Over residues 569-578 (DRSGSSSPDS) the composition is skewed to low complexity.

The protein belongs to the CTP synthase family. As to expression, widely expressed.

Its subcellular location is the cytoplasm. The protein localises to the cytosol. It catalyses the reaction UTP + L-glutamine + ATP + H2O = CTP + L-glutamate + ADP + phosphate + 2 H(+). It functions in the pathway pyrimidine metabolism; CTP biosynthesis via de novo pathway; CTP from UDP: step 2/2. Its activity is regulated as follows. Activated by GTP and inhibited by CTP. This enzyme is involved in the de novo synthesis of CTP, a precursor of DNA, RNA and phospholipids. Catalyzes the ATP-dependent amination of UTP to CTP with either L-glutamine or ammonia as a source of nitrogen. This enzyme and its product, CTP, play a crucial role in the proliferation of activated lymphocytes and therefore in immunity. The polypeptide is CTP synthase 1 (Homo sapiens (Human)).